The following is a 223-amino-acid chain: Neurotrophic factor BDNF precursor form (223 aa).

The N-terminal stretch at 1–5 (SCMKA) is a signal peptide. Positions 6–114 (APMKEVSIRG…AANMSMRVRR (109 aa)) are excised as a propeptide. Asparagine 107 is a glycosylation site (N-linked (GlcNAc...) asparagine). 2 disulfides stabilise this stretch: cysteine 127–cysteine 194 and cysteine 172–cysteine 223.

The protein belongs to the NGF-beta family.

The protein localises to the secreted. Promotes the survival of neuronal populations that are all located either in the central nervous system or directly connected to it. The sequence is that of Neurotrophic factor BDNF precursor form (BDNF) from Eryx colubrinus colubrinus.